The sequence spans 49 residues: Soritesidine (49 aa).

It is found in the secreted. Its function is as follows. Very potent toxin that exhibits a wide range of toxicities over various organisms and cells including brine shrimp larvae (Artemia salina), sea hare eggs (Aplysia kurodai), mice, and cultured mammalian cells. An SOR-containing fraction cleaves plasmid DNA in a bivalent metal ion dependent manner suggesting genotoxicity of SOR. This is Soritesidine from Spongosorites sp. (strain QM G324170) (Okinawan marine Sponge).